We begin with the raw amino-acid sequence, 246 residues long: UPF0736 protein GWCH70_0753 (246 aa).

It belongs to the UPF0736 family.

This Geobacillus sp. (strain WCH70) protein is UPF0736 protein GWCH70_0753.